A 207-amino-acid chain; its full sequence is Superoxide dismutase [Mn] (207 aa).

H28, H76, D160, and H164 together coordinate Mn(2+).

The protein belongs to the iron/manganese superoxide dismutase family. The cofactor is Mn(2+).

The protein localises to the secreted. The enzyme catalyses 2 superoxide + 2 H(+) = H2O2 + O2. Its function is as follows. Destroys superoxide anion radicals which are normally produced within the cells and which are toxic to biological systems. The polypeptide is Superoxide dismutase [Mn] (sodA) (Mycolicibacterium paratuberculosis (strain ATCC BAA-968 / K-10) (Mycobacterium paratuberculosis)).